Here is a 132-residue protein sequence, read N- to C-terminus: Small ribosomal subunit protein uS8c (132 aa).

This sequence belongs to the universal ribosomal protein uS8 family. Part of the 30S ribosomal subunit.

The protein localises to the plastid. Its subcellular location is the chloroplast. One of the primary rRNA binding proteins, it binds directly to 16S rRNA central domain where it helps coordinate assembly of the platform of the 30S subunit. This is Small ribosomal subunit protein uS8c (rps8) from Marchantia polymorpha (Common liverwort).